Reading from the N-terminus, the 253-residue chain is DNA repair protein RecO (253 aa).

The protein belongs to the RecO family.

Functionally, involved in DNA repair and RecF pathway recombination. The chain is DNA repair protein RecO from Streptococcus agalactiae serotype Ia (strain ATCC 27591 / A909 / CDC SS700).